We begin with the raw amino-acid sequence, 325 residues long: Reaction center protein M chain (325 aa).

The next 3 membrane-spanning stretches (helical) occupy residues 54-80 (LGPL…LASV), 111-140 (NDGG…RARA), and 143-168 (MGTH…RPVL). Positions 183 and 203 each coordinate (7R,8Z)-bacteriochlorophyll b. The helical transmembrane segment at 198–226 (FYNPFHALSIAFLYGATLLFAMHGATILA) threads the bilayer. 2 residues coordinate Fe cation: histidine 220 and glutamate 235. Position 253 (tryptophan 253) interacts with a ubiquinone. A helical membrane pass occupies residues 260–286 (NATTESIHRWAWWFAVLCPLCGGIGIL). Histidine 267 serves as a coordination point for Fe cation.

The protein belongs to the reaction center PufL/M/PsbA/D family. As to quaternary structure, reaction center is composed of four bacteriochlorophylls, two bacteriopheophytins, two ubiquinones, one iron, and three highly hydrophobic polypeptide chains (designated L, M, and H).

Its subcellular location is the cell inner membrane. Functionally, the reaction center is a membrane-bound complex that mediates the initial photochemical event in the electron transfer process of photosynthesis. The protein is Reaction center protein M chain (pufM) of Rubrivivax gelatinosus (strain NBRC 100245 / IL144).